A 357-amino-acid polypeptide reads, in one-letter code: Heat-inducible transcription repressor HrcA (357 aa).

This sequence belongs to the HrcA family.

In terms of biological role, negative regulator of class I heat shock genes (grpE-dnaK-dnaJ and groELS operons). Prevents heat-shock induction of these operons. This is Heat-inducible transcription repressor HrcA from Chlorobium phaeobacteroides (strain DSM 266 / SMG 266 / 2430).